A 181-amino-acid chain; its full sequence is Ribosome maturation factor RimM (181 aa).

Residues 98-177 enclose the PRC barrel domain; it reads EGEFFYCDLV…KITTHNAKTL (80 aa).

The protein belongs to the RimM family. Binds ribosomal protein uS19.

The protein resides in the cytoplasm. An accessory protein needed during the final step in the assembly of 30S ribosomal subunit, possibly for assembly of the head region. Essential for efficient processing of 16S rRNA. May be needed both before and after RbfA during the maturation of 16S rRNA. It has affinity for free ribosomal 30S subunits but not for 70S ribosomes. The protein is Ribosome maturation factor RimM of Helicobacter pylori (strain HPAG1).